The sequence spans 57 residues: Large ribosomal subunit protein bL32c (57 aa).

The protein belongs to the bacterial ribosomal protein bL32 family.

The protein resides in the plastid. The protein localises to the chloroplast. This Acorus calamus (Sweet flag) protein is Large ribosomal subunit protein bL32c.